A 344-amino-acid chain; its full sequence is Uroporphyrinogen decarboxylase (344 aa).

Residues 24-28 (RQAGR), phenylalanine 43, aspartate 74, tyrosine 151, serine 206, and histidine 323 each bind substrate.

This sequence belongs to the uroporphyrinogen decarboxylase family. As to quaternary structure, homodimer.

The protein localises to the cytoplasm. The enzyme catalyses uroporphyrinogen III + 4 H(+) = coproporphyrinogen III + 4 CO2. Its pathway is porphyrin-containing compound metabolism; protoporphyrin-IX biosynthesis; coproporphyrinogen-III from 5-aminolevulinate: step 4/4. In terms of biological role, catalyzes the decarboxylation of four acetate groups of uroporphyrinogen-III to yield coproporphyrinogen-III. This is Uroporphyrinogen decarboxylase from Rhodobacter capsulatus (Rhodopseudomonas capsulata).